We begin with the raw amino-acid sequence, 131 residues long: DNA-directed RNA polymerase subunit omega (131 aa).

Belongs to the RNA polymerase subunit omega family. The RNAP catalytic core consists of 2 alpha, 1 beta, 1 beta' and 1 omega subunit. When a sigma factor is associated with the core the holoenzyme is formed, which can initiate transcription.

It catalyses the reaction RNA(n) + a ribonucleoside 5'-triphosphate = RNA(n+1) + diphosphate. Functionally, promotes RNA polymerase assembly. Latches the N- and C-terminal regions of the beta' subunit thereby facilitating its interaction with the beta and alpha subunits. The protein is DNA-directed RNA polymerase subunit omega of Chelativorans sp. (strain BNC1).